A 344-amino-acid chain; its full sequence is L-rhamnose-proton symporter (344 aa).

10 consecutive transmembrane segments (helical) span residues 4-24 (AITMGIFWHLIGAASAACFYA), 38-58 (WSVGGIVSWIILPWAISALLL), 68-88 (FSLSTLLPVFLFGAMWGIGNI), 101-121 (MGIGIAIGITLIVGTLMTPII), 137-157 (TLLGVLVALIGVGIVTRAGQL), 175-195 (LVLAVMCGIFSAGMSFAMNAA), 214-234 (LPSYVVIMGGGAIINLGFCFI), 259-279 (VLLSTLGGLMWYLQFFFYAWG), 290-310 (ISWMLHMSFYVLCGGIVGLVL), and 323-343 (VLSLGCVVIIVAANIVGIGMA).

It belongs to the L-rhamnose transporter (TC 2.A.7.6) family.

The protein resides in the cell inner membrane. It catalyses the reaction L-rhamnopyranose(in) + H(+)(in) = L-rhamnopyranose(out) + H(+)(out). Uptake of L-rhamnose across the cytoplasmic membrane with the concomitant transport of protons into the cell (symport system). This is L-rhamnose-proton symporter from Escherichia coli (strain ATCC 8739 / DSM 1576 / NBRC 3972 / NCIMB 8545 / WDCM 00012 / Crooks).